The primary structure comprises 377 residues: RING-H2 finger protein ATL22 (377 aa).

An N-terminal signal peptide occupies residues 1–23; the sequence is MTSKLLPLLLNLIFLFFFPLLNA. The helical transmembrane segment at 244–264 threads the bilayer; sequence IMCLSLVGPLTALTFCVGLVM. The segment at 327–369 adopts an RING-type; atypical zinc-finger fold; it reads CPICLSEYATKETVRCLPECEHCFHTECIDAWLKLHSSCPVCR.

It belongs to the RING-type zinc finger family. ATL subfamily.

It is found in the membrane. It carries out the reaction S-ubiquitinyl-[E2 ubiquitin-conjugating enzyme]-L-cysteine + [acceptor protein]-L-lysine = [E2 ubiquitin-conjugating enzyme]-L-cysteine + N(6)-ubiquitinyl-[acceptor protein]-L-lysine.. The protein operates within protein modification; protein ubiquitination. In Arabidopsis thaliana (Mouse-ear cress), this protein is RING-H2 finger protein ATL22 (ATL22).